A 298-amino-acid chain; its full sequence is 4-hydroxy-tetrahydrodipicolinate synthase (298 aa).

T51 contacts pyruvate. The active-site Proton donor/acceptor is Y139. K167 acts as the Schiff-base intermediate with substrate in catalysis. I209 is a binding site for pyruvate.

Belongs to the DapA family. Homotetramer; dimer of dimers.

Its subcellular location is the cytoplasm. It catalyses the reaction L-aspartate 4-semialdehyde + pyruvate = (2S,4S)-4-hydroxy-2,3,4,5-tetrahydrodipicolinate + H2O + H(+). It functions in the pathway amino-acid biosynthesis; L-lysine biosynthesis via DAP pathway; (S)-tetrahydrodipicolinate from L-aspartate: step 3/4. Functionally, catalyzes the condensation of (S)-aspartate-beta-semialdehyde [(S)-ASA] and pyruvate to 4-hydroxy-tetrahydrodipicolinate (HTPA). This chain is 4-hydroxy-tetrahydrodipicolinate synthase, found in Haemophilus influenzae (strain PittEE).